The primary structure comprises 333 residues: Taste receptor type 2 member 110 (333 aa).

Residues 1-13 lie on the Extracellular side of the membrane; the sequence is MFSQIISTSDIFT. The chain crosses the membrane as a helical span at residues 14-34; sequence FTIILFVELVIGILGNGFIAL. The Cytoplasmic segment spans residues 35–60; the sequence is VNIMDWTKRRSISSADQILTALAITR. Residues 61–81 form a helical membrane-spanning segment; that stretch reads FLYVWFMIICILLFMLCPHLL. The Extracellular segment spans residues 82-89; that stretch reads TRSEIVTS. Residues 90–110 form a helical membrane-spanning segment; it reads IGIIWIVNNHFSVWLATCLGV. At 111–133 the chain is on the cytoplasmic side; it reads FYFLKIANFSNSLFLYLKWRVKK. A helical membrane pass occupies residues 134 to 154; that stretch reads VVLMIIQVSMIFLILNLLSLS. At 155–205 the chain is on the extracellular side; that stretch reads MYDQFSIDVYEGNTSYNLGDSTPFPTISLFINSSKVFVITNSSHIFLPINS. N186 and N195 each carry an N-linked (GlcNAc...) asparagine glycan. Residues 206 to 226 form a helical membrane-spanning segment; sequence LFMLIPFTVSLVAFLMLIFSL. The Cytoplasmic segment spans residues 227–255; sequence WKHHKKMQVNAKPPRDASTMAHIKALQTG. Residues 256-276 form a helical membrane-spanning segment; sequence FSFLLLYAVYLLFIVIGMLSL. Residues 277–283 lie on the Extracellular side of the membrane; that stretch reads RLIGGKL. The chain crosses the membrane as a helical span at residues 284–304; that stretch reads ILLFDHISGIGFPISHSFVLI. Residues 305–333 are Cytoplasmic-facing; the sequence is LGNNKLRQASLSVLHCLRCRSKDMDTMGP.

Belongs to the G-protein coupled receptor T2R family.

The protein localises to the membrane. In terms of biological role, gustducin-coupled receptor implicated in the perception of bitter compounds in the oral cavity and the gastrointestinal tract. Signals through PLCB2 and the calcium-regulated cation channel TRPM5. The polypeptide is Taste receptor type 2 member 110 (Mus musculus (Mouse)).